The following is a 259-amino-acid chain: Imidazole glycerol phosphate synthase subunit HisF (259 aa).

Residues aspartate 11 and aspartate 130 contribute to the active site.

It belongs to the HisA/HisF family. In terms of assembly, heterodimer of HisH and HisF.

It localises to the cytoplasm. The enzyme catalyses 5-[(5-phospho-1-deoxy-D-ribulos-1-ylimino)methylamino]-1-(5-phospho-beta-D-ribosyl)imidazole-4-carboxamide + L-glutamine = D-erythro-1-(imidazol-4-yl)glycerol 3-phosphate + 5-amino-1-(5-phospho-beta-D-ribosyl)imidazole-4-carboxamide + L-glutamate + H(+). The protein operates within amino-acid biosynthesis; L-histidine biosynthesis; L-histidine from 5-phospho-alpha-D-ribose 1-diphosphate: step 5/9. Functionally, IGPS catalyzes the conversion of PRFAR and glutamine to IGP, AICAR and glutamate. The HisF subunit catalyzes the cyclization activity that produces IGP and AICAR from PRFAR using the ammonia provided by the HisH subunit. The chain is Imidazole glycerol phosphate synthase subunit HisF from Syntrophobacter fumaroxidans (strain DSM 10017 / MPOB).